We begin with the raw amino-acid sequence, 333 residues long: Phenylalanine--tRNA ligase alpha subunit (333 aa).

Residue E254 participates in Mg(2+) binding.

The protein belongs to the class-II aminoacyl-tRNA synthetase family. Phe-tRNA synthetase alpha subunit type 1 subfamily. In terms of assembly, tetramer of two alpha and two beta subunits. Requires Mg(2+) as cofactor.

Its subcellular location is the cytoplasm. It carries out the reaction tRNA(Phe) + L-phenylalanine + ATP = L-phenylalanyl-tRNA(Phe) + AMP + diphosphate + H(+). This chain is Phenylalanine--tRNA ligase alpha subunit, found in Xylella fastidiosa (strain M12).